The chain runs to 152 residues: Small ribosomal subunit protein uS13 (152 aa).

This sequence belongs to the universal ribosomal protein uS13 family. As to quaternary structure, part of the 30S ribosomal subunit. Forms a loose heterodimer with protein S19. Forms two bridges to the 50S subunit in the 70S ribosome.

Its function is as follows. Located at the top of the head of the 30S subunit, it contacts several helices of the 16S rRNA. In the 70S ribosome it contacts the 23S rRNA (bridge B1a) and protein L5 of the 50S subunit (bridge B1b), connecting the 2 subunits; these bridges are implicated in subunit movement. This chain is Small ribosomal subunit protein uS13, found in Pyrobaculum arsenaticum (strain DSM 13514 / JCM 11321 / PZ6).